We begin with the raw amino-acid sequence, 421 residues long: Bone morphogenetic protein 10 (421 aa).

The N-terminal stretch at 1–21 (MGSLVLPLSAVFCLVAHSASG) is a signal peptide. Residues 22–313 (SPIMGLEQSP…IDDSSARIRR (292 aa)) constitute a propeptide that is removed on maturation. N-linked (GlcNAc...) asparagine glycosylation is found at N67 and N131. Cystine bridges form between C320/C386, C349/C418, and C353/C420.

The protein belongs to the TGF-beta family. As to quaternary structure, homodimer; disulfide-linked. Interacts with FBN1 (via N-terminal domain) and FBN2. Interacts with ENG. In terms of tissue distribution, in the embryo, expressed exclusively in the ventricular trabecular myocardium of the developing heart from 9.0 dpc-13.5 dpc. By 16.5 dpc-18.5 dpc, only detectable in atria. Highly expressed in the adult heart where it is found in the right atrium but not in the left atrium. Lower levels in adult liver and lung.

The protein resides in the secreted. Its function is as follows. Required for maintaining the proliferative activity of embryonic cardiomyocytes by preventing premature activation of the negative cell cycle regulator CDKN1C/p57KIP and maintaining the required expression levels of cardiogenic factors such as MEF2C and NKX2-5. Acts as a ligand for ACVRL1/ALK1, BMPR1A/ALK3 and BMPR1B/ALK6, leading to activation of SMAD1, SMAD5 and SMAD8 transcription factors. Inhibits endothelial cell migration and growth. May reduce cell migration and cell matrix adhesion in breast cancer cell lines. The sequence is that of Bone morphogenetic protein 10 (Bmp10) from Mus musculus (Mouse).